The primary structure comprises 111 residues: Putative pterin-4-alpha-carbinolamine dehydratase (111 aa).

The protein belongs to the pterin-4-alpha-carbinolamine dehydratase family.

The enzyme catalyses (4aS,6R)-4a-hydroxy-L-erythro-5,6,7,8-tetrahydrobiopterin = (6R)-L-erythro-6,7-dihydrobiopterin + H2O. This chain is Putative pterin-4-alpha-carbinolamine dehydratase, found in Chlorobaculum tepidum (strain ATCC 49652 / DSM 12025 / NBRC 103806 / TLS) (Chlorobium tepidum).